Here is a 243-residue protein sequence, read N- to C-terminus: Pyridoxine 5'-phosphate synthase (243 aa).

Position 7 (asparagine 7) interacts with 3-amino-2-oxopropyl phosphate. 9 to 10 provides a ligand contact to 1-deoxy-D-xylulose 5-phosphate; it reads DH. 3-amino-2-oxopropyl phosphate is bound at residue arginine 18. The Proton acceptor role is filled by histidine 43. The 1-deoxy-D-xylulose 5-phosphate site is built by arginine 45 and histidine 50. Glutamate 70 acts as the Proton acceptor in catalysis. Threonine 100 lines the 1-deoxy-D-xylulose 5-phosphate pocket. Histidine 191 acts as the Proton donor in catalysis. 3-amino-2-oxopropyl phosphate is bound by residues glycine 192 and 213–214; that span reads GH.

This sequence belongs to the PNP synthase family. Homooctamer; tetramer of dimers.

The protein resides in the cytoplasm. It catalyses the reaction 3-amino-2-oxopropyl phosphate + 1-deoxy-D-xylulose 5-phosphate = pyridoxine 5'-phosphate + phosphate + 2 H2O + H(+). It participates in cofactor biosynthesis; pyridoxine 5'-phosphate biosynthesis; pyridoxine 5'-phosphate from D-erythrose 4-phosphate: step 5/5. Catalyzes the complicated ring closure reaction between the two acyclic compounds 1-deoxy-D-xylulose-5-phosphate (DXP) and 3-amino-2-oxopropyl phosphate (1-amino-acetone-3-phosphate or AAP) to form pyridoxine 5'-phosphate (PNP) and inorganic phosphate. The protein is Pyridoxine 5'-phosphate synthase of Magnetococcus marinus (strain ATCC BAA-1437 / JCM 17883 / MC-1).